A 208-amino-acid chain; its full sequence is UPF0316 protein SERP1448 (208 aa).

Helical transmembrane passes span 8–28, 40–60, and 66–86; these read PWLM…FLTM, VAAV…GLVM, and IQNI…GMKI.

It belongs to the UPF0316 family.

It localises to the cell membrane. In Staphylococcus epidermidis (strain ATCC 35984 / DSM 28319 / BCRC 17069 / CCUG 31568 / BM 3577 / RP62A), this protein is UPF0316 protein SERP1448.